The primary structure comprises 1402 residues: Transcription elongation factor spt-6 (1402 aa).

A disordered region spans residues 1-199 (MSNSMRDLID…PKDRGLNIDT (199 aa)). Composition is skewed to acidic residues over residues 10 to 28 (DGEA…DEEA), 40 to 52 (DSSE…EDEE), 62 to 75 (IVDE…EDSD), and 90 to 102 (EEEE…DLDL). A compositionally biased stretch (basic and acidic residues) spans 123–135 (HRDDHRPTERRGL). The segment covering 161 to 176 (DEFDDFIEDDYPEDDE) has biased composition (acidic residues). Residues 177–199 (ERRHREEDEEVARPKDRGLNIDT) are compositionally biased toward basic and acidic residues. The S1 motif domain occupies 1094 to 1161 (GMIVAANVRV…KEFVSKLSMR (68 aa)). The SH2 domain occupies 1209–1306 (PLFKPFNSTQ…KKVDELMQCD (98 aa)).

It belongs to the SPT6 family.

The protein localises to the nucleus. The protein resides in the chromosome. In terms of biological role, histone H3-H4 chaperone that plays a role in maintenance of chromatin structure during RNA polymerase II transcription elongation thereby repressing transcription initiation from cryptic promoters. Mediates the reassembly of nucleosomes onto the promoters of at least a selected set of genes during repression; the nucleosome reassembly is essential for transcriptional repression. Essential for viability. The protein is Transcription elongation factor spt-6 (spt-6) of Neurospora crassa (strain ATCC 24698 / 74-OR23-1A / CBS 708.71 / DSM 1257 / FGSC 987).